Consider the following 346-residue polypeptide: Holliday junction branch migration complex subunit RuvB (346 aa).

Positions 1 to 183 (MTEQRIIASS…FGIVQRLEFY (183 aa)) are large ATPase domain (RuvB-L). ATP contacts are provided by residues I22, R23, G64, K67, T68, T69, 130–132 (EDF), R173, Y183, and R220. T68 contributes to the Mg(2+) binding site. The segment at 184 to 254 (SPQELTRIVI…VAQAAMQMLK (71 aa)) is small ATPAse domain (RuvB-S). Residues 257–346 (PEGFDELDRR…PGIGEPGDLF (90 aa)) form a head domain (RuvB-H) region. R293, R312, and R317 together coordinate DNA.

Belongs to the RuvB family. As to quaternary structure, homohexamer. Forms an RuvA(8)-RuvB(12)-Holliday junction (HJ) complex. HJ DNA is sandwiched between 2 RuvA tetramers; dsDNA enters through RuvA and exits via RuvB. An RuvB hexamer assembles on each DNA strand where it exits the tetramer. Each RuvB hexamer is contacted by two RuvA subunits (via domain III) on 2 adjacent RuvB subunits; this complex drives branch migration. In the full resolvosome a probable DNA-RuvA(4)-RuvB(12)-RuvC(2) complex forms which resolves the HJ.

Its subcellular location is the cytoplasm. The enzyme catalyses ATP + H2O = ADP + phosphate + H(+). The RuvA-RuvB-RuvC complex processes Holliday junction (HJ) DNA during genetic recombination and DNA repair, while the RuvA-RuvB complex plays an important role in the rescue of blocked DNA replication forks via replication fork reversal (RFR). RuvA specifically binds to HJ cruciform DNA, conferring on it an open structure. The RuvB hexamer acts as an ATP-dependent pump, pulling dsDNA into and through the RuvAB complex. RuvB forms 2 homohexamers on either side of HJ DNA bound by 1 or 2 RuvA tetramers; 4 subunits per hexamer contact DNA at a time. Coordinated motions by a converter formed by DNA-disengaged RuvB subunits stimulates ATP hydrolysis and nucleotide exchange. Immobilization of the converter enables RuvB to convert the ATP-contained energy into a lever motion, pulling 2 nucleotides of DNA out of the RuvA tetramer per ATP hydrolyzed, thus driving DNA branch migration. The RuvB motors rotate together with the DNA substrate, which together with the progressing nucleotide cycle form the mechanistic basis for DNA recombination by continuous HJ branch migration. Branch migration allows RuvC to scan DNA until it finds its consensus sequence, where it cleaves and resolves cruciform DNA. This chain is Holliday junction branch migration complex subunit RuvB, found in Xanthomonas axonopodis pv. citri (strain 306).